Here is a 605-residue protein sequence, read N- to C-terminus: UvrABC system protein C (605 aa).

Residues Thr13 to Val92 enclose the GIY-YIG domain. Positions Ser205–Ala240 constitute a UVR domain.

This sequence belongs to the UvrC family. Interacts with UvrB in an incision complex.

It localises to the cytoplasm. Its function is as follows. The UvrABC repair system catalyzes the recognition and processing of DNA lesions. UvrC both incises the 5' and 3' sides of the lesion. The N-terminal half is responsible for the 3' incision and the C-terminal half is responsible for the 5' incision. This chain is UvrABC system protein C, found in Chlamydia caviae (strain ATCC VR-813 / DSM 19441 / 03DC25 / GPIC) (Chlamydophila caviae).